The following is an 804-amino-acid chain: Protein-lysine N-methyltransferase SMYD4 (804 aa).

112–114 provides a ligand contact to S-adenosyl-L-methionine; the sequence is RSA. The SET domain occupies 233–574; the sequence is SSVGLCIDPL…KGQEILHCYG (342 aa). Zn(2+) is bound by residues Cys296, Cys299, Cys309, Cys312, Cys318, Cys322, His331, and Cys335. The MYND-type zinc finger occupies 296 to 335; it reads CHRCLKHTLATVPCDGCSYAKYCSQECLQQAWELYHRTEC. S-adenosyl-L-methionine-binding positions include Asn427, 539 to 540, Tyr573, and Phe595; that span reads NH.

Belongs to the class V-like SAM-binding methyltransferase superfamily. As to quaternary structure, interacts (via MYND-type zinc finger) with HDAC1.

The protein localises to the nucleus. Its subcellular location is the cytoplasm. It carries out the reaction L-lysyl-[protein] + S-adenosyl-L-methionine = N(6)-methyl-L-lysyl-[protein] + S-adenosyl-L-homocysteine + H(+). In terms of biological role, protein-lysine N-methyltransferase. Monomethylates PRMT5, modulating its transcriptional activity. May also act as a histone methyltransferase. Plays a critical role in cardiac development. Acts as a key epigenetic regulator of gene expression during cardiac development via its dual activities as a methyltransferase and negative regulator of HDAC1. This Pongo abelii (Sumatran orangutan) protein is Protein-lysine N-methyltransferase SMYD4 (SMYD4).